A 627-amino-acid chain; its full sequence is Protein fem-1 homolog B (627 aa).

ANK repeat units lie at residues 45–74 (QRST…VQTQ), 87–116 (DGAT…NVNH), 120–149 (TNST…NISI), and 153–182 (YDNT…DPNA). Positions 185, 186, and 218 each coordinate Zn(2+). 2 ANK repeats span residues 186 to 215 (CGAT…AIVV) and 218 to 248 (HGMT…DRRS). Residues 344-377 (SHPIIYRGAVYADNMEFEQCIKLWLHALHLRQKG) form a TPR repeat. 2 ANK repeats span residues 483–527 (EGFT…EVNA) and 531–568 (EGNS…HTDM).

Belongs to the fem-1 family. Component of a CRL2 E3 ubiquitin-protein ligase complex, also named ECS (Elongin BC-CUL2/5-SOCS-box protein) complex, composed of CUL2, Elongin BC (ELOB and ELOC), RBX1 and substrate-specific adapter FEM1B. Homooligomer. Interacts with PPM1F and PHTF1. Interacts with the death domain of FAS/TNFRSF6 and TNFRSF1A. Interacts with CHEK1. Interacts with NKX3-1. As to expression, widely expressed. Highly expressed in testis. Weakly expressed in other tissues.

It localises to the cytoplasm. The protein localises to the nucleus. It functions in the pathway protein modification; protein ubiquitination. Its activity is regulated as follows. Activity of the CRL2(FEM1B) complex toward FNIP1 is inhibited by BEX family proteins (BEX1, BEX2, BEX3, BEX4 and/or BEX5) in absence of reductive stress. Mechanistically, BEX proteins act as pseudosubstrate inhibitors that associate with FEM1B via zinc in absence of reductive stress, thereby preventing association between FEM1B and FNIP1. Its function is as follows. Substrate-recognition component of a Cul2-RING (CRL2) E3 ubiquitin-protein ligase complex of the DesCEND (destruction via C-end degrons) pathway, which recognizes a C-degron located at the extreme C terminus of target proteins, leading to their ubiquitination and degradation. The C-degron recognized by the DesCEND pathway is usually a motif of less than ten residues and can be present in full-length proteins, truncated proteins or proteolytically cleaved forms. The CRL2(FEM1B) complex specifically recognizes proteins ending with -Gly-Leu-Asp-Arg, such as CDK5R1, leading to their ubiquitination and degradation. Also acts as a regulator of the reductive stress response by mediating ubiquitination of reduced FNIP1: in response to reductive stress, the CRL2(FEM1B) complex specifically recognizes a conserved Cys degron in FNIP1 when this degron is reduced, leading to FNIP1 degradation and subsequent activation of mitochondria to recalibrate reactive oxygen species (ROS). Mechanistically, recognizes and binds reduced FNIP1 through two interface zinc ions, which act as a molecular glue that recruit reduced FNIP1 to FEM1B. Promotes ubiquitination of GLI1, suppressing GLI1 transcriptional activator activity. Promotes ubiquitination and degradation of ANKRD37. Promotes ubiquitination and degradation of SLBP. Involved in apoptosis by acting as a death receptor-associated protein that mediates apoptosis. Also involved in glucose homeostasis in pancreatic islet. May also act as an adapter/mediator in replication stress-induced signaling that leads to the activation of CHEK1. This Homo sapiens (Human) protein is Protein fem-1 homolog B.